The chain runs to 20 residues: 23 kDa cell wall protein (20 aa).

The protein localises to the secreted. It localises to the cell wall. The chain is 23 kDa cell wall protein from Arabidopsis thaliana (Mouse-ear cress).